Consider the following 440-residue polypeptide: Thymidine phosphorylase (440 aa).

This sequence belongs to the thymidine/pyrimidine-nucleoside phosphorylase family. Homodimer.

The catalysed reaction is thymidine + phosphate = 2-deoxy-alpha-D-ribose 1-phosphate + thymine. The protein operates within pyrimidine metabolism; dTMP biosynthesis via salvage pathway; dTMP from thymine: step 1/2. In terms of biological role, the enzymes which catalyze the reversible phosphorolysis of pyrimidine nucleosides are involved in the degradation of these compounds and in their utilization as carbon and energy sources, or in the rescue of pyrimidine bases for nucleotide synthesis. The protein is Thymidine phosphorylase of Salmonella agona (strain SL483).